A 387-amino-acid chain; its full sequence is ATP phosphoribosyltransferase regulatory subunit (387 aa).

It belongs to the class-II aminoacyl-tRNA synthetase family. HisZ subfamily. Heteromultimer composed of HisG and HisZ subunits.

The protein resides in the cytoplasm. The protein operates within amino-acid biosynthesis; L-histidine biosynthesis; L-histidine from 5-phospho-alpha-D-ribose 1-diphosphate: step 1/9. Functionally, required for the first step of histidine biosynthesis. May allow the feedback regulation of ATP phosphoribosyltransferase activity by histidine. The sequence is that of ATP phosphoribosyltransferase regulatory subunit from Ralstonia pickettii (strain 12J).